Reading from the N-terminus, the 220-residue chain is Ribosomal RNA large subunit methyltransferase E (220 aa).

S-adenosyl-L-methionine contacts are provided by glycine 60, tryptophan 62, aspartate 92, aspartate 108, and aspartate 133. The active-site Proton acceptor is lysine 173. The tract at residues 198–220 (KPKASRDKSSETFILGRQLKHPR) is disordered.

This sequence belongs to the class I-like SAM-binding methyltransferase superfamily. RNA methyltransferase RlmE family.

It localises to the cytoplasm. It carries out the reaction uridine(2552) in 23S rRNA + S-adenosyl-L-methionine = 2'-O-methyluridine(2552) in 23S rRNA + S-adenosyl-L-homocysteine + H(+). Specifically methylates the uridine in position 2552 of 23S rRNA at the 2'-O position of the ribose in the fully assembled 50S ribosomal subunit. In Burkholderia cenocepacia (strain HI2424), this protein is Ribosomal RNA large subunit methyltransferase E.